Here is a 296-residue protein sequence, read N- to C-terminus: Non-selective voltage-gated ion channel VDAC2 (296 aa).

Residue lysine 25 participates in ATP binding. Lysine 25 is covalently cross-linked (Glycyl lysine isopeptide (Lys-Gly) (interchain with G-Cter in ubiquitin)). Serine 26 is modified (phosphoserine). An ATP-binding site is contributed by lysine 33. An N6-acetyllysine; alternate modification is found at lysine 33. Lysine 33 carries the post-translational modification N6-succinyllysine; alternate. Residue lysine 33 forms a Glycyl lysine isopeptide (Lys-Gly) (interchain with G-Cter in ubiquitin); alternate linkage. The next 2 membrane-spanning stretches (beta stranded) occupy residues 39-48 and 52-60; these read LVKLDVKTKS and VEFTTSGSS. Glycyl lysine isopeptide (Lys-Gly) (interchain with G-Cter in ubiquitin) cross-links involve residues lysine 66 and lysine 74. A beta stranded membrane pass occupies residues 67–77; sequence VNGSLETKYKW. A Phosphotyrosine modification is found at tyrosine 80. A run of 3 beta stranded transmembrane segments spans residues 82 to 89, 93 to 102, and 108 to 117; these read LTFTEKWN, TLGTEIAIED, and LKLTFDTTFS. Threonine 120 is modified (phosphothreonine). At lysine 122 the chain carries N6-acetyllysine; alternate. Lysine 122 is covalently cross-linked (Glycyl lysine isopeptide (Lys-Gly) (interchain with G-Cter in ubiquitin); alternate). A Glycyl lysine isopeptide (Lys-Gly) (interchain with G-Cter in ubiquitin) cross-link involves residue lysine 123. 4 beta stranded membrane passes run 124–133, 136–143, 150–158, and 163–171; these read SGKIKSAYKR, LNLGCDVD, AIHGSAVFG, and LAGYQMTFD. A Glycyl lysine isopeptide (Lys-Gly) (interchain with G-Cter in ubiquitin) cross-link involves residue lysine 174. 6 consecutive transmembrane segments (beta stranded) span residues 176-188, 191-198, 202-211, 215-224, 231-240, and 244-251; these read KLTR…GYKT, FQLHTNVN, EFGGSIYQKV, LETAVNLAWT, RFGIAAKYKL, and ASISAKVN. Serine 206 is modified (phosphoserine). Phosphoserine is present on serine 253. NAD(+) is bound by residues 255-257 and 273-277; these read LVG and SALID. A run of 2 beta stranded transmembrane segments spans residues 255 to 264 and 267 to 276; these read LVGVGYTQTL and GVKLTLSALI. N6-acetyllysine; alternate is present on lysine 279. Residue lysine 279 forms a Glycyl lysine isopeptide (Lys-Gly) (interchain with G-Cter in ubiquitin); alternate linkage. The beta stranded transmembrane segment at 286–295 threads the bilayer; that stretch reads HKLGLGLELE. Lysine 287 is covalently cross-linked (Glycyl lysine isopeptide (Lys-Gly) (interchain with G-Cter in ubiquitin)).

The protein belongs to the eukaryotic mitochondrial porin family. Monomer, homodimer and higher order oligomers; formation of higher order structures is necessary for scramblase activity. Post-translationally, ubiquitinated by PRKN during mitophagy, leading to its degradation and enhancement of mitophagy. Deubiquitinated by USP30.

Its subcellular location is the mitochondrion outer membrane. The protein localises to the membrane. The catalysed reaction is chloride(in) = chloride(out). It catalyses the reaction K(+)(in) = K(+)(out). It carries out the reaction a 1,2-diacyl-sn-glycero-3-phospho-L-serine(in) = a 1,2-diacyl-sn-glycero-3-phospho-L-serine(out). The enzyme catalyses a 1,2-diacyl-sn-glycero-3-phosphocholine(in) = a 1,2-diacyl-sn-glycero-3-phosphocholine(out). The catalysed reaction is a 1,2-diacyl-sn-glycero-3-phospho-(1D-myo-inositol)(in) = a 1,2-diacyl-sn-glycero-3-phospho-(1D-myo-inositol)(out). In terms of biological role, non-selective voltage-gated ion channel that mediates the transport of anions and cations through the mitochondrion outer membrane and plasma membrane. The channel adopts an open conformation at zero mV and a closed conformation at both positive and negative potentials. There are two populations of channels; the main that functions in a lower open-state conductance with lower ion selectivity, that switch, in a voltage-dependent manner, from the open to a low-conducting 'closed' state and the other that has a normal ion selectivity in the typical high conductance, 'open' state. Binds various lipids, including the sphingolipid ceramide, the phospholipid phosphatidylcholine, and the sterols cholesterol and oxysterol. Binding of ceramide promotes the mitochondrial outer membrane permeabilization (MOMP) apoptotic pathway. Its function is as follows. Catalyzes the scrambling of phospholipids across the outer mitochondrial membrane; the mechanism is unrelated to channel activity and is capable of translocating both anionic and zwitterionic phospholipids. This is Non-selective voltage-gated ion channel VDAC2 from Meleagris gallopavo (Wild turkey).